The primary structure comprises 256 residues: Geranylgeranylglyceryl phosphate synthase (256 aa).

Residues Asp-28 and Ser-53 each contribute to the Mg(2+) site. Sn-glycerol 1-phosphate is bound by residues Tyr-172–Gly-178, Gly-203–Gly-204, and Gly-225–Thr-226.

It belongs to the GGGP/HepGP synthase family. Group II subfamily. Mg(2+) is required as a cofactor.

It localises to the cytoplasm. The enzyme catalyses sn-glycerol 1-phosphate + (2E,6E,10E)-geranylgeranyl diphosphate = sn-3-O-(geranylgeranyl)glycerol 1-phosphate + diphosphate. Its pathway is membrane lipid metabolism; glycerophospholipid metabolism. Functionally, prenyltransferase that catalyzes the transfer of the geranylgeranyl moiety of geranylgeranyl diphosphate (GGPP) to the C3 hydroxyl of sn-glycerol-1-phosphate (G1P). This reaction is the first ether-bond-formation step in the biosynthesis of archaeal membrane lipids. This Methanococcus maripaludis (strain C7 / ATCC BAA-1331) protein is Geranylgeranylglyceryl phosphate synthase.